Consider the following 367-residue polypeptide: B2 bradykinin receptor (367 aa).

At 1-36 the chain is on the extracellular side; it reads MLNITSQVLAPALNGSVSQSSGCPNTEWSGWLNVIQ. Asparagine 3 and asparagine 14 each carry an N-linked (GlcNAc...) asparagine glycan. A helical membrane pass occupies residues 37–60; the sequence is APFLWVLFVLATLENLFVLSVFCL. The Cytoplasmic segment spans residues 61–69; it reads HKSSCTVAE. The chain crosses the membrane as a helical span at residues 70-94; it reads VYLGNLAAADLILACGLPFWAVTIA. The Extracellular portion of the chain corresponds to 95 to 107; sequence NHFDWLFGEALCR. A disulfide bridge links cysteine 106 with cysteine 187. A helical membrane pass occupies residues 108–129; that stretch reads VVNTMIYMNLYSSICFLMLVSI. Topologically, residues 130 to 151 are cytoplasmic; it reads DRYLALVKTMSIGRMRRVRWAK. Tyrosine 132 is subject to Phosphotyrosine. The chain crosses the membrane as a helical span at residues 152-174; sequence LYSLVIWGCTLLLSSPMLVFRTM. Residues 175–197 are Extracellular-facing; it reads KDYRDEGYNVTACIIDYPSRSWE. Residue asparagine 183 is glycosylated (N-linked (GlcNAc...) asparagine). Residues 198-224 form a helical membrane-spanning segment; that stretch reads VFTNVLLNLVGFLLPLSVITFCTVQIL. Residues 225–243 lie on the Cytoplasmic side of the membrane; it reads QVLRNNEMQKFKEIQTERR. A helical transmembrane segment spans residues 244–268; that stretch reads ATVLVLAVLLLFVVCWLPFQVSTFL. The Extracellular portion of the chain corresponds to 269-287; that stretch reads DTLLKLGVLSSCWDEHVID. The helical transmembrane segment at 288-311 threads the bilayer; sequence VITQVGSFMGYSNSCLNPLVYVIV. Residues 312-367 are Cytoplasmic-facing; that stretch reads GKRFRKKSREVYRAACPKAGCVLEPVQAESSMGTLRTSISVERQIHKLPEWTRSSQ. Tyrosine 323 is subject to Phosphotyrosine. Cysteine 327 carries the S-palmitoyl cysteine lipid modification. Serine 342 bears the Phosphoserine mark. Threonine 345 carries the phosphothreonine modification. Phosphoserine; by GRK6 occurs at positions 349 and 351.

This sequence belongs to the G-protein coupled receptor 1 family. Bradykinin receptor subfamily. BDKRB2 sub-subfamily. As to quaternary structure, forms a complex with PECAM1 and GNAQ. Interacts with PECAM1.

Its subcellular location is the cell membrane. Receptor for bradykinin. It is associated with G proteins that activate a phosphatidylinositol-calcium second messenger system. This is B2 bradykinin receptor (BDKRB2) from Oryctolagus cuniculus (Rabbit).